Consider the following 149-residue polypeptide: Transcription antitermination protein NusB (149 aa).

It belongs to the NusB family.

Functionally, involved in transcription antitermination. Required for transcription of ribosomal RNA (rRNA) genes. Binds specifically to the boxA antiterminator sequence of the ribosomal RNA (rrn) operons. The sequence is that of Transcription antitermination protein NusB from Chromobacterium violaceum (strain ATCC 12472 / DSM 30191 / JCM 1249 / CCUG 213 / NBRC 12614 / NCIMB 9131 / NCTC 9757 / MK).